The sequence spans 435 residues: 5-methylthioadenosine/S-adenosylhomocysteine deaminase (435 aa).

The Zn(2+) site is built by His65 and His67. 3 residues coordinate substrate: Glu94, Arg150, and His189. Residue His216 coordinates Zn(2+). Residues Glu219 and Asp304 each coordinate substrate. Zn(2+) is bound at residue Asp304.

This sequence belongs to the metallo-dependent hydrolases superfamily. MTA/SAH deaminase family. It depends on Zn(2+) as a cofactor.

The enzyme catalyses S-adenosyl-L-homocysteine + H2O + H(+) = S-inosyl-L-homocysteine + NH4(+). The catalysed reaction is S-methyl-5'-thioadenosine + H2O + H(+) = S-methyl-5'-thioinosine + NH4(+). In terms of biological role, catalyzes the deamination of 5-methylthioadenosine and S-adenosyl-L-homocysteine into 5-methylthioinosine and S-inosyl-L-homocysteine, respectively. Is also able to deaminate adenosine. This Bacillus cereus (strain ATCC 10987 / NRS 248) protein is 5-methylthioadenosine/S-adenosylhomocysteine deaminase.